The chain runs to 136 residues: Cell division protein SepF 3 (136 aa).

It belongs to the SepF family. Homodimer. Interacts with FtsZ.

The protein localises to the cytoplasm. Cell division protein that is part of the divisome complex and is recruited early to the Z-ring. Probably stimulates Z-ring formation, perhaps through the cross-linking of FtsZ protofilaments. Its function overlaps with FtsA. This Streptomyces coelicolor (strain ATCC BAA-471 / A3(2) / M145) protein is Cell division protein SepF 3.